Reading from the N-terminus, the 203-residue chain is ATP-dependent Clp protease proteolytic subunit 1 (203 aa).

Ser101 (nucleophile) is an active-site residue. His126 is a catalytic residue.

Belongs to the peptidase S14 family. Fourteen ClpP subunits assemble into 2 heptameric rings which stack back to back to give a disk-like structure with a central cavity, resembling the structure of eukaryotic proteasomes.

It is found in the cytoplasm. The catalysed reaction is Hydrolysis of proteins to small peptides in the presence of ATP and magnesium. alpha-casein is the usual test substrate. In the absence of ATP, only oligopeptides shorter than five residues are hydrolyzed (such as succinyl-Leu-Tyr-|-NHMec, and Leu-Tyr-Leu-|-Tyr-Trp, in which cleavage of the -Tyr-|-Leu- and -Tyr-|-Trp bonds also occurs).. Functionally, cleaves peptides in various proteins in a process that requires ATP hydrolysis. Has a chymotrypsin-like activity. Plays a major role in the degradation of misfolded proteins. The protein is ATP-dependent Clp protease proteolytic subunit 1 of Synechococcus sp. (strain JA-3-3Ab) (Cyanobacteria bacterium Yellowstone A-Prime).